The chain runs to 460 residues: Bifunctional protein GlmU (460 aa).

The tract at residues 1–228 (MKNYALVLAA…NSLAMGVNDL (228 aa)) is pyrophosphorylase. Residues 8–11 (LAAG), K22, Q72, and 77–78 (GT) contribute to the UDP-N-acetyl-alpha-D-glucosamine site. Mg(2+) is bound at residue D102. 4 residues coordinate UDP-N-acetyl-alpha-D-glucosamine: G139, E154, N169, and N226. N226 lines the Mg(2+) pocket. The interval 229–249 (YAISKAEKYLREYINKDHMLN) is linker. The N-acetyltransferase stretch occupies residues 250-460 (GVSMINPETI…LISPKPKKEE (211 aa)). Positions 331 and 349 each coordinate UDP-N-acetyl-alpha-D-glucosamine. Catalysis depends on H361, which acts as the Proton acceptor. Y364 and N375 together coordinate UDP-N-acetyl-alpha-D-glucosamine. Acetyl-CoA is bound by residues 384–385 (NY), A421, and R438.

The protein in the N-terminal section; belongs to the N-acetylglucosamine-1-phosphate uridyltransferase family. This sequence in the C-terminal section; belongs to the transferase hexapeptide repeat family. As to quaternary structure, homotrimer. It depends on Mg(2+) as a cofactor.

The protein localises to the cytoplasm. The catalysed reaction is alpha-D-glucosamine 1-phosphate + acetyl-CoA = N-acetyl-alpha-D-glucosamine 1-phosphate + CoA + H(+). The enzyme catalyses N-acetyl-alpha-D-glucosamine 1-phosphate + UTP + H(+) = UDP-N-acetyl-alpha-D-glucosamine + diphosphate. Its pathway is nucleotide-sugar biosynthesis; UDP-N-acetyl-alpha-D-glucosamine biosynthesis; N-acetyl-alpha-D-glucosamine 1-phosphate from alpha-D-glucosamine 6-phosphate (route II): step 2/2. It participates in nucleotide-sugar biosynthesis; UDP-N-acetyl-alpha-D-glucosamine biosynthesis; UDP-N-acetyl-alpha-D-glucosamine from N-acetyl-alpha-D-glucosamine 1-phosphate: step 1/1. It functions in the pathway bacterial outer membrane biogenesis; LPS lipid A biosynthesis. Functionally, catalyzes the last two sequential reactions in the de novo biosynthetic pathway for UDP-N-acetylglucosamine (UDP-GlcNAc). The C-terminal domain catalyzes the transfer of acetyl group from acetyl coenzyme A to glucosamine-1-phosphate (GlcN-1-P) to produce N-acetylglucosamine-1-phosphate (GlcNAc-1-P), which is converted into UDP-GlcNAc by the transfer of uridine 5-monophosphate (from uridine 5-triphosphate), a reaction catalyzed by the N-terminal domain. The sequence is that of Bifunctional protein GlmU from Acholeplasma laidlawii (strain PG-8A).